The following is a 317-amino-acid chain: MNPNYLDFEQPIAELEAKIEELRLVGNDSGISLSDEIGKLEDKNRKLTESIFRDLSAWQVSQLSRHPQRPYMLDYVESLFSDFDELHGDRNFADDAAIVGGVARLDDKPVMLIGHQKGRDVKEKVRRNFGMPRPEGYRKACRLMEMAERFKMPVLTFIDTPGAYPGIDAEERGQSEAIAYNLAVMSRLRTPIVATVVGEGGSGGALAIGVCDELQMLQYSTYSVISPEGCASILWKSAEKASEAAQAMGITAERLKELGFVDTLIKEPLGGAHRNPQKMAGHIKDALGASLERLESMEMDDLLSRRYERLMSYGAPQ.

Residues 39–293 (KLEDKNRKLT…KDALGASLER (255 aa)) enclose the CoA carboxyltransferase C-terminal domain.

Belongs to the AccA family. Acetyl-CoA carboxylase is a heterohexamer composed of biotin carboxyl carrier protein (AccB), biotin carboxylase (AccC) and two subunits each of ACCase subunit alpha (AccA) and ACCase subunit beta (AccD).

It is found in the cytoplasm. It carries out the reaction N(6)-carboxybiotinyl-L-lysyl-[protein] + acetyl-CoA = N(6)-biotinyl-L-lysyl-[protein] + malonyl-CoA. Its pathway is lipid metabolism; malonyl-CoA biosynthesis; malonyl-CoA from acetyl-CoA: step 1/1. Functionally, component of the acetyl coenzyme A carboxylase (ACC) complex. First, biotin carboxylase catalyzes the carboxylation of biotin on its carrier protein (BCCP) and then the CO(2) group is transferred by the carboxyltransferase to acetyl-CoA to form malonyl-CoA. The chain is Acetyl-coenzyme A carboxylase carboxyl transferase subunit alpha from Chromohalobacter salexigens (strain ATCC BAA-138 / DSM 3043 / CIP 106854 / NCIMB 13768 / 1H11).